The primary structure comprises 147 residues: Large ribosomal subunit protein uL15 (147 aa).

The disordered stretch occupies residues 1 to 65 (MQLHELKPAP…PLQRRLPKRG (65 aa)). Composition is skewed to gly residues over residues 21 to 31 (QGIGSGLGKTA) and 42 to 52 (SGGGVRPGFEG).

It belongs to the universal ribosomal protein uL15 family. In terms of assembly, part of the 50S ribosomal subunit.

Its function is as follows. Binds to the 23S rRNA. The sequence is that of Large ribosomal subunit protein uL15 from Heliobacterium modesticaldum (strain ATCC 51547 / Ice1).